Here is a 225-residue protein sequence, read N- to C-terminus: N-(5'-phosphoribosyl)anthranilate isomerase (225 aa).

The protein belongs to the TrpF family.

The catalysed reaction is N-(5-phospho-beta-D-ribosyl)anthranilate = 1-(2-carboxyphenylamino)-1-deoxy-D-ribulose 5-phosphate. The protein operates within amino-acid biosynthesis; L-tryptophan biosynthesis; L-tryptophan from chorismate: step 3/5. This chain is N-(5'-phosphoribosyl)anthranilate isomerase, found in Nitrobacter hamburgensis (strain DSM 10229 / NCIMB 13809 / X14).